We begin with the raw amino-acid sequence, 492 residues long: MQLTTQALMVQGTTSDAGKSVLVTGLCRVLVRKGIKVAPFKSQNMALNSAVTKDGGEIGRAQAVQAQAACIEPTVHMNPVLLKPNTDVGAQIIVQGKAIADMDAIGYNGYKKVVMGPIMESFGILQDEYQTVIIEGAGSPAEINLRENDVANMGFAEKADVPVIIIADIDRGGVFAHLYGTLALLSESEQARVIGFVINRFRGDIKLLESGLDWLEEKTGKPVLGVLPYLHGLMLEAEDAINVQQVEAADEQLNVVVPVLTRVSNHTDFDPLRMHPQVNLQFVGKGQPIPPTDLIIIPGTKSVRSDLAFLREQGWDKQIERHLRLGGKVMGICGGYQMLGESIADPDGIEGDAGESQGLGYLQTSTILAPEKQLKQTVGTLQLPEQPAVPVRGYEIHAGITSGIQTNAPVQLQDGPDGQLGIDNQVFGTYLHGIFEQTEACNAILSWAGLEATQTPDFDLIREQGIDRVADTLEEYMKLDKLWPEWADKFAK.

A GATase cobBQ-type domain is found at 252–440; it reads QLNVVVPVLT…LHGIFEQTEA (189 aa). Cysteine 333 acts as the Nucleophile in catalysis. Histidine 432 is a catalytic residue.

It belongs to the CobB/CobQ family. CobQ subfamily.

It participates in cofactor biosynthesis; adenosylcobalamin biosynthesis. Functionally, catalyzes amidations at positions B, D, E, and G on adenosylcobyrinic A,C-diamide. NH(2) groups are provided by glutamine, and one molecule of ATP is hydrogenolyzed for each amidation. In Photobacterium profundum (strain SS9), this protein is Cobyric acid synthase.